Consider the following 37-residue polypeptide: Cytochrome b6-f complex subunit 5 (37 aa).

Residues 5–25 (FLLGIILGLIPITLIGLFVTA) form a helical membrane-spanning segment.

It belongs to the PetG family. In terms of assembly, the 4 large subunits of the cytochrome b6-f complex are cytochrome b6, subunit IV (17 kDa polypeptide, PetD), cytochrome f and the Rieske protein, while the 4 small subunits are PetG, PetL, PetM and PetN. The complex functions as a dimer.

Its subcellular location is the plastid membrane. Component of the cytochrome b6-f complex, which mediates electron transfer between photosystem II (PSII) and photosystem I (PSI), cyclic electron flow around PSI, and state transitions. PetG is required for either the stability or assembly of the cytochrome b6-f complex. In Cuscuta obtusiflora (Peruvian dodder), this protein is Cytochrome b6-f complex subunit 5.